The sequence spans 373 residues: tRNA N6-adenosine threonylcarbamoyltransferase (373 aa).

Residues His-128, His-132, and Tyr-149 each coordinate a divalent metal cation. Residues 149 to 153 (YVSGG), Asp-181, Gly-196, Glu-200, and Asn-302 contribute to the substrate site. Residue Asp-331 participates in a divalent metal cation binding.

The protein belongs to the KAE1 / TsaD family. As to quaternary structure, component of the EKC/KEOPS complex composed of at least BUD32, CGI121, GON7, KAE1 and PCC1; the whole complex dimerizes. A divalent metal cation serves as cofactor.

It localises to the cytoplasm. The protein localises to the nucleus. It catalyses the reaction L-threonylcarbamoyladenylate + adenosine(37) in tRNA = N(6)-L-threonylcarbamoyladenosine(37) in tRNA + AMP + H(+). In terms of biological role, component of the EKC/KEOPS complex that is required for the formation of a threonylcarbamoyl group on adenosine at position 37 (t(6)A37) in tRNAs that read codons beginning with adenine. The complex is probably involved in the transfer of the threonylcarbamoyl moiety of threonylcarbamoyl-AMP (TC-AMP) to the N6 group of A37. KAE1 likely plays a direct catalytic role in this reaction, but requires other protein(s) of the complex to fulfill this activity. The EKC/KEOPS complex also promotes both telomere uncapping and telomere elongation. The complex is required for efficient recruitment of transcriptional coactivators. The sequence is that of tRNA N6-adenosine threonylcarbamoyltransferase from Candida glabrata (strain ATCC 2001 / BCRC 20586 / JCM 3761 / NBRC 0622 / NRRL Y-65 / CBS 138) (Yeast).